The sequence spans 258 residues: Snake venom serine protease 1 (258 aa).

Residues methionine 1 to alanine 18 form the signal peptide. Positions glutamine 19–leucine 24 are excised as a propeptide. In terms of domain architecture, Peptidase S1 spans valine 25–alanine 249. Disulfide bonds link cysteine 31–cysteine 163, cysteine 50–cysteine 66, cysteine 98–cysteine 256, cysteine 142–cysteine 210, cysteine 174–cysteine 189, and cysteine 200–cysteine 225. N-linked (GlcNAc...) asparagine glycosylation occurs at asparagine 44. Residues histidine 65 and aspartate 110 each act as charge relay system in the active site. Residue serine 204 is the Charge relay system of the active site.

The protein belongs to the peptidase S1 family. Snake venom subfamily. As to quaternary structure, monomer. In terms of tissue distribution, expressed by the venom gland.

It localises to the secreted. In terms of biological role, snake venom serine protease that may act in the hemostasis system of the prey. The protein is Snake venom serine protease 1 (TLG1) of Craspedocephalus gramineus (Bamboo pit viper).